A 503-amino-acid chain; its full sequence is ATP synthase subunit alpha (503 aa).

170–177 (GDRATGKT) lines the ATP pocket.

This sequence belongs to the ATPase alpha/beta chains family. As to quaternary structure, F-type ATPases have 2 components, CF(1) - the catalytic core - and CF(0) - the membrane proton channel. CF(1) has five subunits: alpha(3), beta(3), gamma(1), delta(1), epsilon(1). CF(0) has three main subunits: a(1), b(2) and c(9-12). The alpha and beta chains form an alternating ring which encloses part of the gamma chain. CF(1) is attached to CF(0) by a central stalk formed by the gamma and epsilon chains, while a peripheral stalk is formed by the delta and b chains.

It is found in the cell inner membrane. The enzyme catalyses ATP + H2O + 4 H(+)(in) = ADP + phosphate + 5 H(+)(out). Produces ATP from ADP in the presence of a proton gradient across the membrane. The alpha chain is a regulatory subunit. This Aquifex aeolicus (strain VF5) protein is ATP synthase subunit alpha.